The chain runs to 368 residues: tRNA-specific 2-thiouridylase MnmA (368 aa).

ATP-binding positions include 11 to 18 (GMSGGVDS) and Met37. Residues 97-99 (NPD) are interaction with target base in tRNA. Cys102 acts as the Nucleophile in catalysis. Cys102 and Cys199 form a disulfide bridge. ATP is bound at residue Gly127. Residues 149 to 151 (KDQ) form an interaction with tRNA region. The active-site Cysteine persulfide intermediate is Cys199. The segment at 311–312 (RY) is interaction with tRNA.

It belongs to the MnmA/TRMU family.

The protein localises to the cytoplasm. It carries out the reaction S-sulfanyl-L-cysteinyl-[protein] + uridine(34) in tRNA + AH2 + ATP = 2-thiouridine(34) in tRNA + L-cysteinyl-[protein] + A + AMP + diphosphate + H(+). Its function is as follows. Catalyzes the 2-thiolation of uridine at the wobble position (U34) of tRNA, leading to the formation of s(2)U34. The sequence is that of tRNA-specific 2-thiouridylase MnmA from Baumannia cicadellinicola subsp. Homalodisca coagulata.